A 290-amino-acid polypeptide reads, in one-letter code: Protoheme IX farnesyltransferase 1 (290 aa).

Transmembrane regions (helical) follow at residues 8-28, 36-56, 85-105, 108-128, 131-151, 152-172, 211-231, and 269-289; these read ITKP…FFLA, FLLL…GCVV, AAFV…FQVV, LSAV…TMWY, NSVY…LVGY, LAVT…FCLW, AYVV…EAGY, and LLVV…LPFI.

It belongs to the UbiA prenyltransferase family. Protoheme IX farnesyltransferase subfamily.

Its subcellular location is the cell inner membrane. It carries out the reaction heme b + (2E,6E)-farnesyl diphosphate + H2O = Fe(II)-heme o + diphosphate. It participates in porphyrin-containing compound metabolism; heme O biosynthesis; heme O from protoheme: step 1/1. Functionally, converts heme B (protoheme IX) to heme O by substitution of the vinyl group on carbon 2 of heme B porphyrin ring with a hydroxyethyl farnesyl side group. The protein is Protoheme IX farnesyltransferase 1 of Vibrio campbellii (strain ATCC BAA-1116).